Here is a 640-residue protein sequence, read N- to C-terminus: Guanylate-binding protein 4 (640 aa).

A GTPase domain (Globular) region spans residues 1 to 325 (MGERTLHAAV…DAINSGAVPC (325 aa)). A GB1/RHD3-type G domain is found at 50 to 292 (SQPVVVVAIV…FCSYIFTHAK (243 aa)). GTP-binding positions include 60–67 (GLYRTGKS), 82–84 (LGS), and 112–116 (DTEGL). The stretch at 499–612 (GEKAIAAERA…EQLRLLKILD (114 aa)) forms a coiled coil.

The protein belongs to the TRAFAC class dynamin-like GTPase superfamily. GB1/RHD3 GTPase family. GB1 subfamily. Heterodimer with other family members, including GBP1, GBP2 and GBP5. Dimerization regulates subcellular location. Interacts with IRF7; preventing interaction between TRAF6 and IRF7, resulting in impaired TRAF6-mediated IRF7 ubiquitination. In terms of processing, (Microbial infection) Ubiquitinated by S.flexneri IpaH9.8, leading to its degradation by the proteasome, thereby preventing its ability to promote host defense against bacterial infection.

The protein resides in the golgi apparatus membrane. It is found in the cytoplasm. It localises to the nucleus. Its subcellular location is the perinuclear region. The catalysed reaction is GTP + H2O = GDP + phosphate + H(+). Its function is as follows. Interferon (IFN)-inducible GTPase that plays important roles in innate immunity against a diverse range of bacterial, viral and protozoan pathogens. Negatively regulates the antiviral response by inhibiting activation of IRF7 transcription factor. The sequence is that of Guanylate-binding protein 4 from Homo sapiens (Human).